We begin with the raw amino-acid sequence, 241 residues long: MAEKKEPAEGWPILKGEYEVGDPNNCVAVITCGSHLEGQPMLDAGASIVGPCKTENLGLEKVVSHIISNPNIRYLIVTGAEVKGHITGEAMMMLHKNGVKDNRIVGATGAIPYVENLTEESVERLQQQLEECVDLLGTEDLNTITSKIKELAEKDPGAFDAEPMIIQLEEEEEEEEEGGIKPMSAEIATIQARIRNIEKDMINAGEMNKLHSGVLAGKIEGIMVGLVLSLFVLGLLLFGGM.

Over 1–220 the chain is Cytoplasmic; it reads MAEKKEPAEG…HSGVLAGKIE (220 aa). Histidine 85 contacts 5-hydroxybenzimidazolylcob(I)amide. The helical transmembrane segment at 221–241 threads the bilayer; the sequence is GIMVGLVLSLFVLGLLLFGGM.

The protein belongs to the MtrA family. As to quaternary structure, the complex is composed of 8 subunits; MtrA, MtrB, MtrC, MtrD, MtrE, MtrF, MtrG and MtrH. 5-hydroxybenzimidazolylcob(I)amide serves as cofactor.

It localises to the cell membrane. It carries out the reaction 5-methyl-5,6,7,8-tetrahydromethanopterin + coenzyme M + 2 Na(+)(in) = 5,6,7,8-tetrahydromethanopterin + methyl-coenzyme M + 2 Na(+)(out). It participates in one-carbon metabolism; methanogenesis from CO(2); methyl-coenzyme M from 5,10-methylene-5,6,7,8-tetrahydromethanopterin: step 2/2. Functionally, part of a complex that catalyzes the formation of methyl-coenzyme M and tetrahydromethanopterin from coenzyme M and methyl-tetrahydromethanopterin. This is an energy-conserving, sodium-ion translocating step. This is Tetrahydromethanopterin S-methyltransferase subunit A from Methanohalobium evestigatum (strain ATCC BAA-1072 / DSM 3721 / NBRC 107634 / OCM 161 / Z-7303).